The sequence spans 411 residues: Citrate synthase (411 aa).

Catalysis depends on residues His-304 and Asp-363.

Belongs to the citrate synthase family.

It catalyses the reaction oxaloacetate + acetyl-CoA + H2O = citrate + CoA + H(+). It participates in carbohydrate metabolism; tricarboxylic acid cycle; isocitrate from oxaloacetate: step 1/2. This chain is Citrate synthase (gltA), found in Rickettsia akari.